We begin with the raw amino-acid sequence, 140 residues long: Cysteine desulfuration protein SufE (140 aa).

C51 functions as the Cysteine persulfide intermediate in the catalytic mechanism.

This sequence belongs to the SufE family. In terms of assembly, homodimer. Interacts with SufS.

It localises to the cytoplasm. The protein operates within cofactor biosynthesis; iron-sulfur cluster biosynthesis. Participates in cysteine desulfuration mediated by SufS. Cysteine desulfuration mobilizes sulfur from L-cysteine to yield L-alanine and constitutes an essential step in sulfur metabolism for biosynthesis of a variety of sulfur-containing biomolecules. Functions as a sulfur acceptor for SufS, by mediating the direct transfer of the sulfur atom from the S-sulfanylcysteine of SufS, an intermediate product of cysteine desulfuration process. In Yersinia enterocolitica serotype O:8 / biotype 1B (strain NCTC 13174 / 8081), this protein is Cysteine desulfuration protein SufE.